Consider the following 493-residue polypeptide: Probable plastidic glucose transporter 2 (493 aa).

A compositionally biased stretch (polar residues) spans 1–14; sequence MLGLQRETSSMYKR. The interval 1–24 is disordered; sequence MLGLQRETSSMYKRTSSRDYSPMI. 12 consecutive transmembrane segments (helical) span residues 52 to 72, 94 to 114, 128 to 148, 151 to 171, 182 to 202, 211 to 231, 293 to 313, 329 to 349, 356 to 376, 392 to 412, 424 to 444, and 450 to 470; these read LPHV…LGVV, LVVS…GGVA, LPMI…VMLL, FLVG…VTEV, SFIQ…GIPV, VCFW…FLCA, VVFI…NAVF, LGNI…MVLM, LLLL…VGAT, GTLV…GLLL, AMAF…LLFL, and LGPR…VMFV.

The protein belongs to the major facilitator superfamily. Sugar transporter (TC 2.A.1.1) family.

It localises to the plastid. Its subcellular location is the chloroplast membrane. May be involved in the efflux of glucose towards the cytosol. The sequence is that of Probable plastidic glucose transporter 2 from Arabidopsis thaliana (Mouse-ear cress).